Reading from the N-terminus, the 144-residue chain is Mediator of RNA polymerase II transcription subunit 21 (144 aa).

This sequence belongs to the Mediator complex subunit 21 family. As to quaternary structure, interacts with PPARG. Component of the Mediator complex, which is composed of MED1, MED4, MED6, MED7, MED8, MED9, MED10, MED11, MED12, MED13, MED13L, MED14, MED15, MED16, MED17, MED18, MED19, MED20, MED21, MED22, MED23, MED24, MED25, MED26, MED27, MED29, MED30, MED31, CCNC, CDK8 and CDC2L6/CDK11. The MED12, MED13, CCNC and CDK8 subunits form a distinct module termed the CDK8 module. Mediator containing the CDK8 module is less active than Mediator lacking this module in supporting transcriptional activation. Individual preparations of the Mediator complex lacking one or more distinct subunits have been variously termed ARC, CRSP, DRIP, PC2, SMCC and TRAP. Interacts with THRA in a ligand-dependent fashion.

The protein localises to the nucleus. Functionally, component of the Mediator complex, a coactivator involved in the regulated transcription of nearly all RNA polymerase II-dependent genes. Mediator functions as a bridge to convey information from gene-specific regulatory proteins to the basal RNA polymerase II transcription machinery. Mediator is recruited to promoters by direct interactions with regulatory proteins and serves as a scaffold for the assembly of a functional preinitiation complex with RNA polymerase II and the general transcription factors. The protein is Mediator of RNA polymerase II transcription subunit 21 (MED21) of Homo sapiens (Human).